A 375-amino-acid chain; its full sequence is Homeobox protein Meis3 (375 aa).

A disordered region spans residues 25 to 51 (PETVPAVPGPYGPHRPPQPLPPGLDSD). The segment covering 31–46 (VPGPYGPHRPPQPLPP) has biased composition (pro residues). Residues 96–179 (GGDVCSSDSF…PIDLVIEDRD (84 aa)) form the MEIS N-terminal domain. Disordered stretches follow at residues 197–268 (PDQN…KRGI) and 329–348 (NRTG…GGYT). Residues 227–241 (SQSGDNSSDQGDGLD) are compositionally biased toward low complexity. Positions 262-324 (RNKKRGIFPK…NARRRIVQPM (63 aa)) form a DNA-binding region, homeobox; TALE-type.

The protein belongs to the TALE/MEIS homeobox family.

Its subcellular location is the nucleus. Its function is as follows. Transcriptional regulator which directly modulates PDPK1 expression, thus promoting survival of pancreatic beta-cells. Also regulates expression of NDFIP1, BNIP3, and CCNG1. This Homo sapiens (Human) protein is Homeobox protein Meis3 (MEIS3).